The chain runs to 544 residues: CTP synthase (544 aa).

Residues 1 to 266 are amidoligase domain; sequence MTKFIFVTGG…DDLICERFGL (266 aa). Residue Ser-13 participates in CTP binding. Ser-13 lines the UTP pocket. ATP is bound by residues 14–19 and Asp-71; that span reads SLGKGI. Mg(2+)-binding residues include Asp-71 and Glu-140. CTP contacts are provided by residues 147–149, 187–192, and Lys-223; these read DIE and KTKPTQ. UTP contacts are provided by residues 187 to 192 and Lys-223; that span reads KTKPTQ. Positions 291-543 constitute a Glutamine amidotransferase type-1 domain; sequence TVAMVGKYVE…VKAAKNYSEA (253 aa). Gly-354 is a binding site for L-glutamine. The Nucleophile; for glutamine hydrolysis role is filled by Cys-381. Residues 382 to 385, Glu-404, and Arg-471 each bind L-glutamine; that span reads LGMQ. Catalysis depends on residues His-516 and Glu-518.

This sequence belongs to the CTP synthase family. As to quaternary structure, homotetramer.

It carries out the reaction UTP + L-glutamine + ATP + H2O = CTP + L-glutamate + ADP + phosphate + 2 H(+). It catalyses the reaction L-glutamine + H2O = L-glutamate + NH4(+). The enzyme catalyses UTP + NH4(+) + ATP = CTP + ADP + phosphate + 2 H(+). It functions in the pathway pyrimidine metabolism; CTP biosynthesis via de novo pathway; CTP from UDP: step 2/2. With respect to regulation, allosterically activated by GTP, when glutamine is the substrate; GTP has no effect on the reaction when ammonia is the substrate. The allosteric effector GTP functions by stabilizing the protein conformation that binds the tetrahedral intermediate(s) formed during glutamine hydrolysis. Inhibited by the product CTP, via allosteric rather than competitive inhibition. Functionally, catalyzes the ATP-dependent amination of UTP to CTP with either L-glutamine or ammonia as the source of nitrogen. Regulates intracellular CTP levels through interactions with the four ribonucleotide triphosphates. The chain is CTP synthase from Psychrobacter arcticus (strain DSM 17307 / VKM B-2377 / 273-4).